The chain runs to 84 residues: uncharacterized protein (84 aa).

The stretch at 5-31 forms a coiled coil; that stretch reads KIQEIINELDNLMNRERKYIELVATVE.

This is an uncharacterized protein from Methanocaldococcus jannaschii (strain ATCC 43067 / DSM 2661 / JAL-1 / JCM 10045 / NBRC 100440) (Methanococcus jannaschii).